Reading from the N-terminus, the 286-residue chain is Urease accessory protein UreD 2 (286 aa).

It belongs to the UreD family. UreD, UreF and UreG form a complex that acts as a GTP-hydrolysis-dependent molecular chaperone, activating the urease apoprotein by helping to assemble the nickel containing metallocenter of UreC. The UreE protein probably delivers the nickel.

The protein resides in the cytoplasm. Its function is as follows. Required for maturation of urease via the functional incorporation of the urease nickel metallocenter. The chain is Urease accessory protein UreD 2 from Bradyrhizobium sp. (strain ORS 278).